The chain runs to 184 residues: Shikimate kinase (184 aa).

17–22 provides a ligand contact to ATP; sequence GAGKTT. T21 is a Mg(2+) binding site. Substrate contacts are provided by D39, R63, and G85. An ATP-binding site is contributed by R123. R142 lines the substrate pocket.

It belongs to the shikimate kinase family. As to quaternary structure, monomer. Requires Mg(2+) as cofactor.

The protein resides in the cytoplasm. The enzyme catalyses shikimate + ATP = 3-phosphoshikimate + ADP + H(+). Its pathway is metabolic intermediate biosynthesis; chorismate biosynthesis; chorismate from D-erythrose 4-phosphate and phosphoenolpyruvate: step 5/7. Its function is as follows. Catalyzes the specific phosphorylation of the 3-hydroxyl group of shikimic acid using ATP as a cosubstrate. This is Shikimate kinase from Burkholderia pseudomallei (strain 1710b).